The chain runs to 291 residues: tRNA dimethylallyltransferase (291 aa).

Residue 9–16 (GTTASGKT) coordinates ATP. Residue 11–16 (TASGKT) participates in substrate binding. The segment at 34–37 (DSLC) is interaction with substrate tRNA.

Belongs to the IPP transferase family. Monomer. It depends on Mg(2+) as a cofactor.

The enzyme catalyses adenosine(37) in tRNA + dimethylallyl diphosphate = N(6)-dimethylallyladenosine(37) in tRNA + diphosphate. In terms of biological role, catalyzes the transfer of a dimethylallyl group onto the adenine at position 37 in tRNAs that read codons beginning with uridine, leading to the formation of N6-(dimethylallyl)adenosine (i(6)A). In Campylobacter lari (strain RM2100 / D67 / ATCC BAA-1060), this protein is tRNA dimethylallyltransferase.